A 503-amino-acid chain; its full sequence is MPPTTALSALLLLLLSPASHSHNGNETSTSAIKSSTVQSHQSATTSTEVTTGHPVASTLASTQPSNPTPFTTSTQSPSMPTSTPNPTSNQSGGNLTSSVSEVDKTKTSSPSSTAFTSSSGQTASSGGKSGDSFTTAPTTTLGLINVSSQPTDLNTTSKLLSTPTTDNTTSPQQPVDSSPSTASHPVGQHTPAAVPSSSGSTPSTDNSTLTWKPTTHKPLGTSEATQPLTSQTPGITTLPVSTLQQSMASTVGTTTEEFTHLISNGTPVAPPGPSTPSPIWAFGNYQLNCEPPIRPDEELLILNLTRASLCERSPLDEKEKLVELLCHSVKASFKPAEDLCTLHVAPILDNQAVAVKRIIIETKLSPKAVYELLKDRWDDLTEAGVSDMKLGKEGPPEVNEDRFSLPLIITIVCMASFLLLVAALYGCCHQRISQRKDQQRLTEELQTVENGYHDNPTLEVMETPSEMQEKKVVNLNGELGDSWIVPLDNLTKDDLDEEEDTHL.

The signal sequence occupies residues 1-21 (MPPTTALSALLLLLLSPASHS). Residues 19 to 236 (SHSHNGNETS…PLTSQTPGIT (218 aa)) form a disordered region. Residues 20–50 (HSHNGNETSTSAIKSSTVQSHQSATTSTEVT) are compositionally biased toward polar residues. Over 22–404 (HNGNETSTSA…PPEVNEDRFS (383 aa)) the chain is Extracellular. 3 N-linked (GlcNAc...) asparagine glycosylation sites follow: Asn25, Asn89, and Asn94. Over residues 61–91 (STQPSNPTPFTTSTQSPSMPTSTPNPTSNQS) the composition is skewed to low complexity. Low complexity predominate over residues 107–126 (TSSPSSTAFTSSSGQTASSG). Polar residues predominate over residues 131–183 (DSFTTAPTTTLGLINVSSQPTDLNTTSKLLSTPTTDNTTSPQQPVDSSPSTAS). 4 N-linked (GlcNAc...) asparagine glycosylation sites follow: Asn145, Asn154, Asn167, and Asn206. Positions 196–208 (SSSGSTPSTDNST) are enriched in low complexity. Residues 222-236 (SEATQPLTSQTPGIT) show a composition bias toward polar residues. N-linked (GlcNAc...) asparagine glycosylation is present at Asn303. The chain crosses the membrane as a helical span at residues 405–425 (LPLIITIVCMASFLLLVAALY). Residues 426-503 (GCCHQRISQR…DLDEEEDTHL (78 aa)) are Cytoplasmic-facing. Thr463 bears the Phosphothreonine mark. Ser482 is subject to Phosphoserine. Thr501 carries the post-translational modification Phosphothreonine.

The protein belongs to the podocalyxin family. Monomer; when associated with the membrane raft. Oligomer; when integrated in the apical membrane. Found in a complex with EZR, PODXL and NHERF2. Associates with the actin cytoskeleton through complex formation with EZR and NHERF2. Interacts (via the C-terminal PDZ-binding motif DTHL) with NHERF1 (via the PDZ domains); interaction is not detected in glomerular epithelium cells, take place early in the secretory pathway and is necessary for its apical membrane sorting. Interacts (via the C-terminal PDZ-binding motif DTHL) with NHERF2 (via the PDZ 1 domain); interaction is detected in glomerular epithelium cells. Interacts with EZR. N- and O-linked glycosylated. Sialoglycoprotein. In terms of tissue distribution, expressed in liver cells and hematopoietic cells (at protein level). Glomerular epithelium cell (podocyte).

It is found in the apical cell membrane. Its subcellular location is the cell projection. The protein localises to the microvillus. The protein resides in the membrane raft. It localises to the lamellipodium. It is found in the filopodium. Its subcellular location is the ruffle. The protein localises to the membrane. Involved in the regulation of both adhesion and cell morphology and cancer progression. Functions as an anti-adhesive molecule that maintains an open filtration pathway between neighboring foot processes in the podocyte by charge repulsion. Acts as a pro-adhesive molecule, enhancing the adherence of cells to immobilized ligands, increasing the rate of migration and cell-cell contacts in an integrin-dependent manner. Induces the formation of apical actin-dependent microvilli. Involved in the formation of a preapical plasma membrane subdomain to set up initial epithelial polarization and the apical lumen formation during renal tubulogenesis. Plays a role in cancer development and aggressiveness by inducing cell migration and invasion through its interaction with the actin-binding protein EZR. Affects EZR-dependent signaling events, leading to increased activities of the MAPK and PI3K pathways in cancer cells. The chain is Podocalyxin (Podxl) from Mus musculus (Mouse).